The chain runs to 768 residues: Protein STRUBBELIG (768 aa).

An N-terminal signal peptide occupies residues 1–24 (MSFTRWEVFFGLSVLALTMPFSAG). The Extracellular portion of the chain corresponds to 25–341 (VTNLRDVSAI…GSGKFWSTQR (317 aa)). Cysteines 57 and 66 form a disulfide. An N-linked (GlcNAc...) asparagine glycan is attached at Asn-70. LRR repeat units lie at residues 94–115 (SIQVMDFSSNHISGTIPQALPS), 116–139 (SIRNLSLSSNRFTGNIPFTLSFLS), 140–162 (DLSELSLGSNLLSGEIPDYFQQL), 164–186 (KLTKLDLSSNILEGHLPSSMGDL), 188–210 (SLKILYLQDNKLTGTLDVIEDLF), and 211–231 (LTDLNVENNLFSGPIPPNLLK). A glycan (N-linked (GlcNAc...) asparagine) is linked at Asn-119. Positions 241–334 (PFNTSIITPP…ISPPSGSGSG (94 aa)) are disordered. A glycan (N-linked (GlcNAc...) asparagine) is linked at Asn-243. Pro residues-rich tracts occupy residues 248-283 (TPPPPPVVDPPPATHRAPPVPRIPPVSGVPPAPFAP) and 291-301 (QHPPPSPPLVW). A compositionally biased stretch (polar residues) spans 315-334 (NSVSGQPTLQISPPSGSGSG). Residues 342–362 (IILVVSSVAIIVLVSGLCVTL) traverse the membrane as a helical segment. Residues 363–768 (WRCCRSKIYN…EIVQDLQHMI (406 aa)) are Cytoplasmic-facing. Residues 385-477 (PYFNKPPSQP…RAAHFPPGLN (93 aa)) form a disordered region. Residues 439 to 464 (SYYNKDVNTPQKPLQQPPRQFQSNDT) are compositionally biased toward polar residues. The 272-residue stretch at 497-768 (FSEENIIGEG…EIVQDLQHMI (272 aa)) folds into the Protein kinase domain. ATP-binding positions include 503–511 (IGEGSIGNV) and Lys-525.

Belongs to the protein kinase superfamily. Ser/Thr protein kinase family. As to quaternary structure, interacts (via intra-cellular domain) with AN; this interaction is not required for correct subcellular localization and recycling of SUB. Binds to QKY and POQ at the plasma membrane. Binds to QKY at plasmodesmata (PD) in root epidermal cells to promote tissue morphogenesis. As to expression, expressed in leaves, stems, inflorescences, flower buds and developing root epidermis.

It localises to the cell membrane. It is found in the cell junction. Its subcellular location is the plasmodesma. With respect to regulation, regulated at the post-transcriptional level. In terms of biological role, regulates the expression of transcription factors that define the cell fates. Acts in a non-cell-autonomous fashion, functions in a radial inside-out signaling process, and mediates cell morphogenesis and cell fate across clonally distinct cell layers in floral primordia, developing ovules, and root meristems. Seems to be required for the regulation of cell shape and the orientation of the mitotic division plane. Involved in root hair specification, in the formation of the outer integument and the shape of organs such as carpels and petals and is necessary for the shape and height of the stem. Non-functional SUB proteins are retained in the endoplasmic reticulum and degraded by endoplasmic reticulum-associated degradation (ERAD). Collaboratively with QKY and POQ, regulates cell growth anisotropy during gynoecium development, thus linking together cell-cell communication and cellular growth. Together with QKY, links RLK-dependent signal transduction and intercellular communication mediated by plasmodesmata (PD) to regulate tissue morphogenesis. The sequence is that of Protein STRUBBELIG from Arabidopsis thaliana (Mouse-ear cress).